A 123-amino-acid chain; its full sequence is MAKKGNITSRNLRLSDQIQKELAEMIQREIRDPRLGLVTLQSVSLTPDYAHAKVYFTVLGAEPETAAAILKEKAGYLHSLLFKRLHIHTVPTLHFHHDTSVEHAIEMSKLINEANATRAKDDE.

The protein belongs to the RbfA family. As to quaternary structure, monomer. Binds 30S ribosomal subunits, but not 50S ribosomal subunits or 70S ribosomes.

It is found in the cytoplasm. One of several proteins that assist in the late maturation steps of the functional core of the 30S ribosomal subunit. Associates with free 30S ribosomal subunits (but not with 30S subunits that are part of 70S ribosomes or polysomes). Required for efficient processing of 16S rRNA. May interact with the 5'-terminal helix region of 16S rRNA. The chain is Ribosome-binding factor A from Cupriavidus metallidurans (strain ATCC 43123 / DSM 2839 / NBRC 102507 / CH34) (Ralstonia metallidurans).